A 496-amino-acid polypeptide reads, in one-letter code: Lysine--tRNA ligase (496 aa).

Residues E408 and E415 each coordinate Mg(2+).

Belongs to the class-II aminoacyl-tRNA synthetase family. Homodimer. The cofactor is Mg(2+).

The protein resides in the cytoplasm. The catalysed reaction is tRNA(Lys) + L-lysine + ATP = L-lysyl-tRNA(Lys) + AMP + diphosphate. This chain is Lysine--tRNA ligase, found in Legionella pneumophila (strain Paris).